Here is a 131-residue protein sequence, read N- to C-terminus: MRHHNGLRKLNRTSSHRSAMLRNMTNSLLRHEVIKTTLPKAKELRRVIEPMITLGKKPSLANRRLAFDRLRDRDMVGKLFSELGPRYQTRNGGYLRILKFGFRKGDNAPMALVELMDRPEQPATDTESKAG.

The protein belongs to the bacterial ribosomal protein bL17 family. As to quaternary structure, part of the 50S ribosomal subunit. Contacts protein L32.

In Nitrosospira multiformis (strain ATCC 25196 / NCIMB 11849 / C 71), this protein is Large ribosomal subunit protein bL17.